The sequence spans 626 residues: Biosynthetic arginine decarboxylase (626 aa).

K99 is modified (N6-(pyridoxal phosphate)lysine). Residue 279–289 (VDVGGGLGVDY) coordinates substrate.

Belongs to the Orn/Lys/Arg decarboxylase class-II family. SpeA subfamily. It depends on Mg(2+) as a cofactor. Pyridoxal 5'-phosphate is required as a cofactor.

The catalysed reaction is L-arginine + H(+) = agmatine + CO2. It participates in amine and polyamine biosynthesis; agmatine biosynthesis; agmatine from L-arginine: step 1/1. Its function is as follows. Catalyzes the biosynthesis of agmatine from arginine. This Chromobacterium violaceum (strain ATCC 12472 / DSM 30191 / JCM 1249 / CCUG 213 / NBRC 12614 / NCIMB 9131 / NCTC 9757 / MK) protein is Biosynthetic arginine decarboxylase.